The primary structure comprises 2531 residues: Putative neurobeachin homolog (2531 aa).

Acidic residues-rich tracts occupy residues 1-10 (MDISETEYND), 26-35 (EDEVNDEESN), and 62-74 (EPSD…EESE). Disordered regions lie at residues 1–101 (MDIS…SPPP), 1363–1398 (NDGD…DNGG), 1420–1440 (EELK…MPPQ), and 1642–1670 (RFVP…EISE). The span at 1363-1379 (NDGDHASIKNGSDHSEN) shows a compositional bias: basic and acidic residues. Residues 1427–1440 (QSNGRRPSTLMPPQ) show a composition bias toward polar residues. Basic and acidic residues predominate over residues 1650–1670 (SRHEEANLPEGEKNEEPEISE). Residues 1714-1822 (PSSQSACFST…TVRKVVYQLP (109 aa)) enclose the BEACH-type PH domain. The BEACH domain maps to 1841–2130 (MTPRQLFKHS…QLLAEAHPPR (290 aa)). 4 WD repeats span residues 2289–2332 (GHGD…GFIA), 2350–2389 (GHEA…LRRI), 2429–2468 (LSEE…KLYT), and 2471–2510 (PLNS…WHYE).

This sequence belongs to the WD repeat neurobeachin family. As to quaternary structure, interacts with RII subunit of PKA.

It localises to the cytoplasm. Its subcellular location is the membrane. It is found in the nucleus. Functionally, binds to type II regulatory subunits of protein kinase A and anchors/targets them to the membrane. May anchor the kinase to cytoskeletal and/or organelle-associated proteins. Regulates endosomal traffic in polarized epithelial cells such as the vulval precursor cells and intestinal cells. Thought to act as a negative regulator of lin-12 activity in vulval precursor cells. May have a role in the internalization process from basolateral surface of polarized epithelial cells. The polypeptide is Putative neurobeachin homolog (Caenorhabditis briggsae).